Here is a 208-residue protein sequence, read N- to C-terminus: Small ribosomal subunit protein uS4 (208 aa).

The region spanning 98 to 161 is the S4 RNA-binding domain; the sequence is QRLDNVVYRM…KTNPQIVRAI (64 aa).

It belongs to the universal ribosomal protein uS4 family. Part of the 30S ribosomal subunit. Contacts protein S5. The interaction surface between S4 and S5 is involved in control of translational fidelity.

In terms of biological role, one of the primary rRNA binding proteins, it binds directly to 16S rRNA where it nucleates assembly of the body of the 30S subunit. With S5 and S12 plays an important role in translational accuracy. This Campylobacter fetus subsp. fetus (strain 82-40) protein is Small ribosomal subunit protein uS4.